The sequence spans 684 residues: uncharacterized protein (684 aa).

In terms of domain architecture, Helicase ATP-binding spans 54–239 (LKYLYNKKDV…LLFNRDFEVV (186 aa)). 67 to 74 (TSTASGKS) is an ATP binding site. A DEVH box motif is present at residues 181–184 (DELH). A Helicase C-terminal domain is found at 264-419 (LLRRLIENLV…YMPVNIKNRF (156 aa)).

This sequence belongs to the helicase family.

This is an uncharacterized protein from Methanocaldococcus jannaschii (strain ATCC 43067 / DSM 2661 / JAL-1 / JCM 10045 / NBRC 100440) (Methanococcus jannaschii).